A 526-amino-acid chain; its full sequence is Estrogen receptor beta (526 aa).

The modulating stretch occupies residues 1–145 (MDIKNSPSNL…SPSSKRDAHF (145 aa)). Residues Ser-84 and Ser-102 each carry the phosphoserine; by MAPK modification. NR C4-type zinc fingers lie at residues 146–166 (CAVCSDYASGYHYGVWSCEGC) and 182–206 (CPATNQCTIDKNRRKSCQACRLRKC). A DNA-binding region (nuclear receptor) is located at residues 146 to 211 (CAVCSDYASG…RLRKCYEVGM (66 aa)). Positions 261–494 (SPEQLVLTLL…DLLLEMLNAH (234 aa)) constitute an NR LBD domain. Positions 502–526 (LVTGSERSRMEESESKEGSQKPQAQ) are disordered. Residues 507 to 520 (ERSRMEESESKEGS) show a composition bias toward basic and acidic residues.

Belongs to the nuclear hormone receptor family. NR3 subfamily. In terms of assembly, binds DNA as a homodimer. Can form a heterodimer with ESR1. Interacts with NCOA1, NCOA3, NCOA5 and NCOA6 coactivators, leading to a strong increase of transcription of target genes. Interacts with UBE1C and AKAP13. Interacts with DNTTIP2. Interacts with CCDC62 in the presence of estradiol/E2; this interaction seems to enhance the transcription of target genes. Interacts with DNAAF4. Interacts with PRMT2. Interacts with CCAR2 (via N-terminus) in a ligand-independent manner. Interacts with RBM39, in the presence of estradiol (E2). Interacts with STUB1/CHIP. Phosphorylation at Ser-84 and Ser-102 recruits NCOA1.

It localises to the nucleus. Functionally, nuclear hormone receptor. Binds estrogens with an affinity similar to that of ESR1/ER-alpha, and activates expression of reporter genes containing estrogen response elements (ERE) in an estrogen-dependent manner. The polypeptide is Estrogen receptor beta (ESR2) (Sus scrofa (Pig)).